A 757-amino-acid chain; its full sequence is Xaa-Pro dipeptidyl-peptidase (757 aa).

Residues serine 348, aspartate 468, and histidine 498 each act as charge relay system in the active site.

Belongs to the peptidase S15 family. In terms of assembly, homodimer.

Its subcellular location is the cytoplasm. The catalysed reaction is Hydrolyzes Xaa-Pro-|- bonds to release unblocked, N-terminal dipeptides from substrates including Ala-Pro-|-p-nitroanilide and (sequentially) Tyr-Pro-|-Phe-Pro-|-Gly-Pro-|-Ile.. Its function is as follows. Removes N-terminal dipeptides sequentially from polypeptides having unsubstituted N-termini provided that the penultimate residue is proline. This Streptococcus pneumoniae (strain Hungary19A-6) protein is Xaa-Pro dipeptidyl-peptidase.